We begin with the raw amino-acid sequence, 445 residues long: tRNA-2-methylthio-N(6)-dimethylallyladenosine synthase (445 aa).

The MTTase N-terminal domain maps to 7-121 (KTFYIETFGC…LPEMLVQLEA (115 aa)). C16, C52, C84, C158, C162, and C165 together coordinate [4Fe-4S] cluster. The Radical SAM core domain maps to 144 to 374 (RDNPHRAYLT…QEKQRAIQIR (231 aa)). Residues 377–443 (AEMIGSIQEV…PNSLVGESAA (67 aa)) form the TRAM domain.

It belongs to the methylthiotransferase family. MiaB subfamily. As to quaternary structure, monomer. [4Fe-4S] cluster serves as cofactor.

It is found in the cytoplasm. It carries out the reaction N(6)-dimethylallyladenosine(37) in tRNA + (sulfur carrier)-SH + AH2 + 2 S-adenosyl-L-methionine = 2-methylsulfanyl-N(6)-dimethylallyladenosine(37) in tRNA + (sulfur carrier)-H + 5'-deoxyadenosine + L-methionine + A + S-adenosyl-L-homocysteine + 2 H(+). Catalyzes the methylthiolation of N6-(dimethylallyl)adenosine (i(6)A), leading to the formation of 2-methylthio-N6-(dimethylallyl)adenosine (ms(2)i(6)A) at position 37 in tRNAs that read codons beginning with uridine. In Solibacter usitatus (strain Ellin6076), this protein is tRNA-2-methylthio-N(6)-dimethylallyladenosine synthase.